Consider the following 305-residue polypeptide: Protoheme IX farnesyltransferase (305 aa).

9 helical membrane-spanning segments follow: residues 38–58, 60–80, 110–130, 131–151, 161–181, 185–205, 227–247, 249–269, and 285–305; these read FITT…SFLG, LDIV…SCAI, AYAF…MTTV, TSAV…TMWS, IGSV…TGTI, AWVL…SLAI, VTKR…FFLG, LGWP…VIGL, and FVYS…ITLF.

It belongs to the UbiA prenyltransferase family. Protoheme IX farnesyltransferase subfamily. Interacts with CtaA.

The protein localises to the cell membrane. It carries out the reaction heme b + (2E,6E)-farnesyl diphosphate + H2O = Fe(II)-heme o + diphosphate. It participates in porphyrin-containing compound metabolism; heme O biosynthesis; heme O from protoheme: step 1/1. In terms of biological role, converts heme B (protoheme IX) to heme O by substitution of the vinyl group on carbon 2 of heme B porphyrin ring with a hydroxyethyl farnesyl side group. This Bacillus pumilus (strain SAFR-032) protein is Protoheme IX farnesyltransferase.